Consider the following 1350-residue polypeptide: Nicotinate hydroxylase hnxS (1350 aa).

Positions 49, 54, 89, 92, 133, and 135 each coordinate [2Fe-2S] cluster. Residues 164-193 (LVGTEEETESDMGAHSGSGDTGSRSSGSCG) are disordered. Residues 180–192 (GSGDTGSRSSGSC) show a composition bias toward low complexity. The FAD-binding PCMH-type domain occupies 256–445 (YGDAEQAWVK…TKIAVPMPSK (190 aa)). Residues 284–291 (LVTGASEV), 379–383 (CLAGN), D392, and K455 contribute to the FAD site. Mo-molybdopterin contacts are provided by Q793 and F824. Positions 828 and 906 each coordinate substrate. R938 and A1107 together coordinate Mo-molybdopterin. The active-site Proton acceptor is the E1281.

Belongs to the xanthine dehydrogenase family. [2Fe-2S] cluster is required as a cofactor. The cofactor is FAD. Requires Mo-molybdopterin as cofactor.

Its activity is regulated as follows. Allopurinol inhibits catalytic activity in a linear fashion. Functionally, nicotinate hydroxylase, part of the hnx cluster involved in the purine degradation. The nicotinate hydroxylase hnxS accepts nicotinate as a substrate and catalyzes the first step of nicotinate catabolism. HnxS also accepts hypoxanthine, but not xanthine, as a substrate. The major facilitator-type transporters hxnP and hxnZ are probably involved in the uptake of nicotinate-derived metabolites, and the oxidoreductases hxnT and hxnY in the further metabolism of 6-OH nicotinic acid. This Emericella nidulans (strain FGSC A4 / ATCC 38163 / CBS 112.46 / NRRL 194 / M139) (Aspergillus nidulans) protein is Nicotinate hydroxylase hnxS.